Reading from the N-terminus, the 359-residue chain is Fructose-bisphosphate aldolase (359 aa).

A D-glyceraldehyde 3-phosphate-binding site is contributed by serine 62. Aspartate 110 (proton donor) is an active-site residue. Zn(2+)-binding residues include histidine 111, aspartate 145, glutamate 175, and histidine 227. Glycine 228 contacts dihydroxyacetone phosphate. Histidine 265 serves as a coordination point for Zn(2+). Residues 266–268 (GGS) and 287–290 (NIDT) each bind dihydroxyacetone phosphate.

It belongs to the class II fructose-bisphosphate aldolase family. In terms of assembly, homodimer. Zn(2+) serves as cofactor.

It carries out the reaction beta-D-fructose 1,6-bisphosphate = D-glyceraldehyde 3-phosphate + dihydroxyacetone phosphate. The protein operates within carbohydrate degradation; glycolysis; D-glyceraldehyde 3-phosphate and glycerone phosphate from D-glucose: step 4/4. In terms of biological role, catalyzes the aldol condensation of dihydroxyacetone phosphate (DHAP or glycerone-phosphate) with glyceraldehyde 3-phosphate (G3P) to form fructose 1,6-bisphosphate (FBP) in gluconeogenesis and the reverse reaction in glycolysis. This chain is Fructose-bisphosphate aldolase (fba), found in Haemophilus influenzae (strain ATCC 51907 / DSM 11121 / KW20 / Rd).